Consider the following 363-residue polypeptide: Phospho-N-acetylmuramoyl-pentapeptide-transferase (363 aa).

10 helical membrane passes run 3-23 (TVLI…PLYI), 55-75 (VVII…TGAL), 76-96 (PTVS…VGFL), 116-136 (LAGQ…FPAA), 158-178 (LAVF…LIIT), 190-210 (GLDG…VLIC), 237-257 (LAVV…WNAS), 261-281 (IFMG…LAIL), 286-306 (ILLV…ILQV), and 340-360 (FWII…AEWV).

It belongs to the glycosyltransferase 4 family. MraY subfamily. It depends on Mg(2+) as a cofactor.

The protein localises to the cell membrane. The catalysed reaction is UDP-N-acetyl-alpha-D-muramoyl-L-alanyl-gamma-D-glutamyl-meso-2,6-diaminopimeloyl-D-alanyl-D-alanine + di-trans,octa-cis-undecaprenyl phosphate = di-trans,octa-cis-undecaprenyl diphospho-N-acetyl-alpha-D-muramoyl-L-alanyl-D-glutamyl-meso-2,6-diaminopimeloyl-D-alanyl-D-alanine + UMP. It functions in the pathway cell wall biogenesis; peptidoglycan biosynthesis. In terms of biological role, catalyzes the initial step of the lipid cycle reactions in the biosynthesis of the cell wall peptidoglycan: transfers peptidoglycan precursor phospho-MurNAc-pentapeptide from UDP-MurNAc-pentapeptide onto the lipid carrier undecaprenyl phosphate, yielding undecaprenyl-pyrophosphoryl-MurNAc-pentapeptide, known as lipid I. In Kineococcus radiotolerans (strain ATCC BAA-149 / DSM 14245 / SRS30216), this protein is Phospho-N-acetylmuramoyl-pentapeptide-transferase.